A 105-amino-acid polypeptide reads, in one-letter code: Late embryogenesis abundant protein Lea5-D (105 aa).

A disordered region spans residues 48–67 (KVERRDAMKESSSSETRAYS). Over residues 57–67 (ESSSSETRAYS) the composition is skewed to low complexity.

It belongs to the LEA type 3 family.

The polypeptide is Late embryogenesis abundant protein Lea5-D (LEA5-D) (Gossypium hirsutum (Upland cotton)).